Consider the following 133-residue polypeptide: MAFRLSSAVLLAALVAAPAYAAPTTTTKVDIAAFDPDKDGTIDLKEALAAGSAAFDKLDPDKDGTLDAKELKGRVSEADLKKLDPDNDGTLDKKEYLAAVEAQFKAANPDNDGTIDARELASPAGSALVNLIR.

The first 21 residues, 1 to 21 (MAFRLSSAVLLAALVAAPAYA), serve as a signal peptide directing secretion. Residues Asp-35, Asp-37, Asp-39, Thr-41, Glu-46, Asp-59, Asp-61, Asp-63, Thr-65, Glu-70, Asp-84, Asp-86, Asp-88, Thr-90, Glu-95, Asn-108, Asp-110, Asp-112, Thr-114, and Glu-119 each contribute to the Nd(3+) site. EF-hand domains lie at 35-46 (DPDKDGTIDLKE), 59-70 (DPDKDGTLDAKE), 84-95 (DPDNDGTLDKKE), and 108-119 (NPDNDGTIDARE).

As to quaternary structure, monomer.

It is found in the periplasm. High-affinity lanthanide (Ln)-binding protein. Shows 100 million-fold selectivity for La(3+) over Ca(2+). Binds 3 equiv of Ln(3+) with picomolar affinity and a fourth with approximately micromolar affinity. May be involved in receiving and then transporting lanthanides (such as La(3+), Nd(3+) and Sm(3+)) to a specific periplasmic destination. In Methylorubrum extorquens (strain ATCC 14718 / DSM 1338 / JCM 2805 / NCIMB 9133 / AM1) (Methylobacterium extorquens), this protein is Lanmodulin.